Reading from the N-terminus, the 211-residue chain is Thymidylate kinase (211 aa).

Position 11–18 (11–18) interacts with ATP; the sequence is GPDGAGKT.

The protein belongs to the thymidylate kinase family.

The catalysed reaction is dTMP + ATP = dTDP + ADP. Phosphorylation of dTMP to form dTDP in both de novo and salvage pathways of dTTP synthesis. The protein is Thymidylate kinase of Streptococcus pyogenes serotype M49 (strain NZ131).